The primary structure comprises 314 residues: MAFIYNGSQTTVTEFILLGLTDDPVLKVILFCIILCIYLVTVFGNLSTILLIGVSSKLHHPMYFFLSHLASVDMGLSSSVTPNMLVNFLTEKNTISYLGCGIQLSSAAFFGAVEFFLLAAMAYDRLVAICNPLLYSTKMSSQVCIQLVAGSYVGGFLNASFVTHFFFSFLFCGPNRVNHFFCDLSPMMELSCSDVSISEIVISFSAGSFTMTTLFVIVIPYFYIFITILKIRSTEGRQKAFSTCTSHLTAVTLYYGTIIFIYVMPKSTYSRDQNKVVSLFYMLVIPVLNPLIYSLRNNEIKDALKRQFYRKTLL.

The Extracellular portion of the chain corresponds to 1 to 28; the sequence is MAFIYNGSQTTVTEFILLGLTDDPVLKV. An N-linked (GlcNAc...) asparagine glycan is attached at Asn-6. The chain crosses the membrane as a helical span at residues 29–49; that stretch reads ILFCIILCIYLVTVFGNLSTI. The Cytoplasmic segment spans residues 50-57; the sequence is LLIGVSSK. Residues 58 to 78 traverse the membrane as a helical segment; it reads LHHPMYFFLSHLASVDMGLSS. Topologically, residues 79 to 102 are extracellular; that stretch reads SVTPNMLVNFLTEKNTISYLGCGI. Residues Cys-100 and Cys-192 are joined by a disulfide bond. Residues 103–123 traverse the membrane as a helical segment; that stretch reads QLSSAAFFGAVEFFLLAAMAY. At 124 to 136 the chain is on the cytoplasmic side; it reads DRLVAICNPLLYS. Residues 137–157 form a helical membrane-spanning segment; that stretch reads TKMSSQVCIQLVAGSYVGGFL. The Extracellular segment spans residues 158–199; sequence NASFVTHFFFSFLFCGPNRVNHFFCDLSPMMELSCSDVSISE. Residues 200–220 traverse the membrane as a helical segment; the sequence is IVISFSAGSFTMTTLFVIVIP. Residues 221–240 are Cytoplasmic-facing; sequence YFYIFITILKIRSTEGRQKA. Residues 241–261 traverse the membrane as a helical segment; the sequence is FSTCTSHLTAVTLYYGTIIFI. The Extracellular segment spans residues 262-274; the sequence is YVMPKSTYSRDQN. The helical transmembrane segment at 275 to 295 threads the bilayer; it reads KVVSLFYMLVIPVLNPLIYSL. Over 296 to 314 the chain is Cytoplasmic; the sequence is RNNEIKDALKRQFYRKTLL.

This sequence belongs to the G-protein coupled receptor 1 family.

Its subcellular location is the cell membrane. Its function is as follows. Potential odorant receptor. This Mus musculus (Mouse) protein is Olfactory receptor 5P62.